The chain runs to 126 residues: Holo-[acyl-carrier-protein] synthase (126 aa).

Mg(2+)-binding residues include D9 and E58.

Belongs to the P-Pant transferase superfamily. AcpS family. The cofactor is Mg(2+).

It localises to the cytoplasm. It carries out the reaction apo-[ACP] + CoA = holo-[ACP] + adenosine 3',5'-bisphosphate + H(+). Transfers the 4'-phosphopantetheine moiety from coenzyme A to a Ser of acyl-carrier-protein. This chain is Holo-[acyl-carrier-protein] synthase, found in Enterobacter sp. (strain 638).